The sequence spans 194 residues: Imidazoleglycerol-phosphate dehydratase (194 aa).

This sequence belongs to the imidazoleglycerol-phosphate dehydratase family.

The protein resides in the cytoplasm. It carries out the reaction D-erythro-1-(imidazol-4-yl)glycerol 3-phosphate = 3-(imidazol-4-yl)-2-oxopropyl phosphate + H2O. The protein operates within amino-acid biosynthesis; L-histidine biosynthesis; L-histidine from 5-phospho-alpha-D-ribose 1-diphosphate: step 6/9. The protein is Imidazoleglycerol-phosphate dehydratase of Streptococcus mutans serotype c (strain ATCC 700610 / UA159).